The sequence spans 834 residues: Serine/threonine-protein kinase TNNI3K (834 aa).

Gly2 carries the N-myristoyl glycine lipid modification. The stretch at 21-49 forms a coiled coil; sequence SESYAIIIERLEDDLQIKENEFQELRHIF. ANK repeat units lie at residues 66–96, 100–129, 133–162, 166–195, 199–229, 233–262, 268–297, 303–334, 338–367, and 380–409; these read RGLS…RPSR, NGFP…DVQQ, GGLT…NVNV, VFFT…DVNV, VGDR…DVNA, EDHV…EVQP, YGDT…TESL, FSET…NINH, DGHT…DMNL, and DEQT…PQDE. In terms of domain architecture, Protein kinase spans 462 to 722; it reads IEFHEIIGSG…EVVRKLEECL (261 aa). Residues 468-476 and Lys489 each bind ATP; that span reads IGSGSFGKV. The Proton acceptor role is filled by Asp587. A disordered region spans residues 815–834; the sequence is PMSPMHLHSRRNSGSFEDGN.

It belongs to the protein kinase superfamily. TKL Ser/Thr protein kinase family. MAP kinase kinase kinase subfamily. In terms of assembly, interacts with TNNI3, ACTC, ACTA1, MYBPC3, AIP, FABP3 and HADHB. The cofactor is Mg(2+). Autophosphorylated.

It localises to the nucleus. It is found in the cytoplasm. It catalyses the reaction L-seryl-[protein] + ATP = O-phospho-L-seryl-[protein] + ADP + H(+). The enzyme catalyses L-threonyl-[protein] + ATP = O-phospho-L-threonyl-[protein] + ADP + H(+). Its function is as follows. May play a role in cardiac physiology. This chain is Serine/threonine-protein kinase TNNI3K, found in Mus musculus (Mouse).